We begin with the raw amino-acid sequence, 353 residues long: Lactosylceramide 4-alpha-galactosyltransferase (353 aa).

At 1-22 (MSKPPDLLLRLLRGAPRQRVCT) the chain is on the cytoplasmic side. Residues 23 to 43 (LFIIGFKFTFFVSIMIYWHVV) traverse the membrane as a helical; Signal-anchor for type II membrane protein segment. Over 44-353 (GEPKEKGQLY…TTHEAMKMYL (310 aa)) the chain is Lumenal. Asn121 carries N-linked (GlcNAc...) asparagine glycosylation. A DXD motif motif is present at residues 192–194 (DTD). Asn203 carries N-linked (GlcNAc...) asparagine glycosylation.

It belongs to the glycosyltransferase 32 family.

It localises to the golgi apparatus membrane. It catalyses the reaction a beta-D-Gal-(1-&gt;4)-beta-D-Glc-(1&lt;-&gt;1)-Cer(d18:1(4E)) + UDP-alpha-D-galactose = a globoside Gb3Cer (d18:1(4E)) + UDP + H(+). The enzyme catalyses a beta-D-Gal-(1&lt;-&gt;1')-ceramide + UDP-alpha-D-galactose = alpha-D-Gal-(1-&gt;4)-beta-D-Gal-(1&lt;-&gt;1')-Cer + UDP + H(+). It functions in the pathway glycolipid biosynthesis. Functionally, catalyzes the transfer of galactose from UDP-alpha-D-galactose to lactosylceramide/beta-D-galactosyl-(1-&gt;4)-beta-D-glucosyl-(1&lt;-&gt;1)-ceramide(d18:1(4E)) to produce globotriaosylceramide/globoside Gb3Cer (d18:1(4E)). Also able to transfer galactose to galactosylceramide/beta-D-Gal-(1&lt;-&gt;1')-Cer. Globoside Gb3Cer is a glycosphingolipid of the globo serie, one of the major types of neutral root structures of glycosphingolipids, that constitute a significant portion of mammalian cell membranes. This is Lactosylceramide 4-alpha-galactosyltransferase (A4GALT) from Pan troglodytes (Chimpanzee).